The following is a 204-amino-acid chain: Thymidylate kinase (204 aa).

Residue 11–18 (GLDKSGKT) coordinates ATP.

This sequence belongs to the thymidylate kinase family.

It carries out the reaction dTMP + ATP = dTDP + ADP. It participates in pyrimidine metabolism; dTTP biosynthesis. The protein is Thymidylate kinase (TMK) of Vaccinia virus (strain Ankara) (VACV).